The primary structure comprises 183 residues: Isopentenyl-diphosphate Delta-isomerase (183 aa).

The Mn(2+) site is built by histidine 26 and histidine 33. The region spanning 31–165 (SLHLAFSSWL…PWAFSPWMVS (135 aa)) is the Nudix hydrolase domain. Residue cysteine 68 is part of the active site. Histidine 70 is a binding site for Mn(2+). Glutamate 88 contacts Mg(2+). 2 residues coordinate Mn(2+): glutamate 115 and glutamate 117. Glutamate 117 is an active-site residue.

Belongs to the IPP isomerase type 1 family. In terms of assembly, homodimer. It depends on Mg(2+) as a cofactor. The cofactor is Mn(2+).

Its subcellular location is the cytoplasm. It carries out the reaction isopentenyl diphosphate = dimethylallyl diphosphate. It participates in isoprenoid biosynthesis; dimethylallyl diphosphate biosynthesis; dimethylallyl diphosphate from isopentenyl diphosphate: step 1/1. Catalyzes the 1,3-allylic rearrangement of the homoallylic substrate isopentenyl (IPP) to its highly electrophilic allylic isomer, dimethylallyl diphosphate (DMAPP). The polypeptide is Isopentenyl-diphosphate Delta-isomerase (Enterobacter sp. (strain 638)).